Reading from the N-terminus, the 190-residue chain is Crossover junction endodeoxyribonuclease RuvC (190 aa).

Residues D8, E67, and D139 contribute to the active site. Residues D8, E67, and D139 each coordinate Mg(2+).

This sequence belongs to the RuvC family. As to quaternary structure, homodimer which binds Holliday junction (HJ) DNA. The HJ becomes 2-fold symmetrical on binding to RuvC with unstacked arms; it has a different conformation from HJ DNA in complex with RuvA. In the full resolvosome a probable DNA-RuvA(4)-RuvB(12)-RuvC(2) complex forms which resolves the HJ. Mg(2+) serves as cofactor.

The protein resides in the cytoplasm. The catalysed reaction is Endonucleolytic cleavage at a junction such as a reciprocal single-stranded crossover between two homologous DNA duplexes (Holliday junction).. The RuvA-RuvB-RuvC complex processes Holliday junction (HJ) DNA during genetic recombination and DNA repair. Endonuclease that resolves HJ intermediates. Cleaves cruciform DNA by making single-stranded nicks across the HJ at symmetrical positions within the homologous arms, yielding a 5'-phosphate and a 3'-hydroxyl group; requires a central core of homology in the junction. The consensus cleavage sequence is 5'-(A/T)TT(C/G)-3'. Cleavage occurs on the 3'-side of the TT dinucleotide at the point of strand exchange. HJ branch migration catalyzed by RuvA-RuvB allows RuvC to scan DNA until it finds its consensus sequence, where it cleaves and resolves the cruciform DNA. This Actinobacillus succinogenes (strain ATCC 55618 / DSM 22257 / CCUG 43843 / 130Z) protein is Crossover junction endodeoxyribonuclease RuvC.